Consider the following 300-residue polypeptide: NAD kinase (300 aa).

D75 (proton acceptor) is an active-site residue. Residues 75-76 (DG), 149-150 (ND), R177, D179, 190-195 (TAYALS), A214, and Q248 each bind NAD(+).

This sequence belongs to the NAD kinase family. A divalent metal cation is required as a cofactor.

It localises to the cytoplasm. The enzyme catalyses NAD(+) + ATP = ADP + NADP(+) + H(+). Functionally, involved in the regulation of the intracellular balance of NAD and NADP, and is a key enzyme in the biosynthesis of NADP. Catalyzes specifically the phosphorylation on 2'-hydroxyl of the adenosine moiety of NAD to yield NADP. The chain is NAD kinase from Burkholderia mallei (strain SAVP1).